A 794-amino-acid polypeptide reads, in one-letter code: uncharacterized protein (794 aa).

Helical transmembrane passes span 34 to 54 (FSAS…VFAV), 67 to 87 (ITAA…AHLI), 99 to 119 (MLAD…AFAS), 132 to 152 (LFLF…ADVT), 257 to 277 (VGPS…AMGL), 283 to 303 (LAWI…MFQL), 315 to 335 (WSVN…VLVF), 353 to 373 (LGAL…ATLF), and 421 to 441 (WTGT…LMGV).

The protein resides in the cell membrane. This is an uncharacterized protein from Corynebacterium glutamicum (strain ATCC 13032 / DSM 20300 / JCM 1318 / BCRC 11384 / CCUG 27702 / LMG 3730 / NBRC 12168 / NCIMB 10025 / NRRL B-2784 / 534).